The sequence spans 87 residues: Small ribosomal subunit protein bS20 (87 aa).

Residues 1-11 (MANIKSAKKRA) show a composition bias toward basic residues. The interval 1-27 (MANIKSAKKRAVQSEKRRQHNASQRSM) is disordered.

This sequence belongs to the bacterial ribosomal protein bS20 family.

Binds directly to 16S ribosomal RNA. This Histophilus somni (strain 129Pt) (Haemophilus somnus) protein is Small ribosomal subunit protein bS20.